Here is a 172-residue protein sequence, read N- to C-terminus: Transcriptional regulator CdrL (172 aa).

The disordered stretch occupies residues serine 72–glutamate 113. Residues cysteine 116–glycine 160 form a DZANK-type zinc finger.

It belongs to the CdrL family.

It is found in the cytoplasm. In terms of biological role, transcriptional regulator involved in the control of cell division. In Halobacterium salinarum (strain ATCC 29341 / DSM 671 / R1), this protein is Transcriptional regulator CdrL.